A 500-amino-acid chain; its full sequence is Glycerol kinase (500 aa).

T12 contributes to the ADP binding site. The ATP site is built by T12, T13, and S14. T12 contributes to the sn-glycerol 3-phosphate binding site. R16 is an ADP binding site. R82, E83, Y135, and D245 together coordinate sn-glycerol 3-phosphate. Glycerol-binding residues include R82, E83, Y135, D245, and Q246. ADP-binding residues include T267 and G310. Residues T267, G310, Q314, and G411 each contribute to the ATP site. The ADP site is built by G411 and N415.

The protein belongs to the FGGY kinase family. In terms of assembly, homotetramer and homodimer (in equilibrium).

The enzyme catalyses glycerol + ATP = sn-glycerol 3-phosphate + ADP + H(+). It functions in the pathway polyol metabolism; glycerol degradation via glycerol kinase pathway; sn-glycerol 3-phosphate from glycerol: step 1/1. Activated by phosphorylation and inhibited by fructose 1,6-bisphosphate (FBP). Its function is as follows. Key enzyme in the regulation of glycerol uptake and metabolism. Catalyzes the phosphorylation of glycerol to yield sn-glycerol 3-phosphate. This is Glycerol kinase from Clostridium perfringens (strain ATCC 13124 / DSM 756 / JCM 1290 / NCIMB 6125 / NCTC 8237 / Type A).